The sequence spans 312 residues: Nodulation protein D 2 (312 aa).

The 58-residue stretch at 6-63 (LDLNLLVALDALMTKRSVTAAARSINLSQPAMSAAIARLRTYFGDDLFTMRGRELIPT) folds into the HTH lysR-type domain. The segment at residues 23-42 (VTAAARSINLSQPAMSAAIA) is a DNA-binding region (H-T-H motif).

This sequence belongs to the LysR transcriptional regulatory family.

Its function is as follows. Represses the expression of the nodABCIJ-nolO-noeI operon. The sequence is that of Nodulation protein D 2 (nodD2) from Sinorhizobium fredii (strain NBRC 101917 / NGR234).